The following is a 287-amino-acid chain: Inorganic pyrophosphatase (287 aa).

Arginine 79 is a binding site for diphosphate. Residues aspartate 116, aspartate 121, and aspartate 153 each coordinate Mg(2+).

The protein belongs to the PPase family. It depends on Mg(2+) as a cofactor.

The protein localises to the cytoplasm. It carries out the reaction diphosphate + H2O = 2 phosphate + H(+). In Candida glabrata (strain ATCC 2001 / BCRC 20586 / JCM 3761 / NBRC 0622 / NRRL Y-65 / CBS 138) (Yeast), this protein is Inorganic pyrophosphatase (IPP1).